Consider the following 548-residue polypeptide: Nodulation protein NolO (548 aa).

This sequence belongs to the NodU/CmcH family.

In terms of biological role, involved in 6-O-carbamoylation of Nod-factors. This is Nodulation protein NolO (nolO) from Bradyrhizobium diazoefficiens (strain JCM 10833 / BCRC 13528 / IAM 13628 / NBRC 14792 / USDA 110).